The chain runs to 724 residues: MKDLQKLSPEIVTINQSFEMEGADMDKMLIFFYEDLRAIGDSWIMDSDWIYRSKYKNSGVGKNKSDRLVEHVLAALDGLIKTTRERFGMMDLESEGRKSFTTPKGVSSEARRSFTRSASYSESNNSFYPSPLTPRSVLPGTMMMSSNSTSPSLWNLRAQALDRLSPVDLKRFAMQILSQRDSESVSETKIGIEEENEESEILAEEKEEEDNDFSVLETEGTEQEIKTEHHRESSGTEHETEAKDHSEGFETEHHRIECFETEHEIDADDHIEDFETEHHHIEGLETEHEIDANDHIEDFETEHHHIEGFETEHENETEDHSETTTSETDSTESSPKEDVPPPPPLTSPQTPSPTVSTFNTKSSLRSQPPPPPPSPEHKAPAPPPPPPMSKASESGEFCQFSKTHSTNGDNAPSMPAPPAPPGSGRSLKKATSKLRRSAQIANLYWALKGKLEGRGVEGKTKKASKGQNSVAEKSPVKVARSGMADALAEMTKRSSYFQQIEEDVQKYAKSIEELKSSIHSFQTKDMKELLEFHSKVESILEKLTDETQVLARFEGFPEKKLEVIRTAGALYKKLDGILVELKNWKIEPPLNDLLDKIERYFNKFKGEIETVERTKDEDAKMFKRYNINIDFEVLVQVKETMVDVSSNCMELALKERREANEEAKNGEESKMKEERAKRLWRAFQFAFKVYTFAGGHDERADCLTRQLAHEIQTDPDQSESSIMS.

Disordered stretches follow at residues Arg-97–Pro-131, Glu-187–Glu-252, Phe-309–Leu-434, and Arg-454–Lys-473. A compositionally biased stretch (polar residues) spans Thr-115–Tyr-128. A coiled-coil region spans residues Glu-187–Glu-217. Residues Glu-193–Asp-212 are compositionally biased toward acidic residues. Basic and acidic residues-rich tracts occupy residues Gln-223–Glu-252 and Phe-309–Glu-322. 2 stretches are compositionally biased toward low complexity: residues Thr-323–Ser-333 and Ser-347–Ser-366. Residues Gln-367–Met-388 show a composition bias toward pro residues. Residues Phe-400 to Asn-410 are compositionally biased toward polar residues. Coiled coils occupy residues Ser-495 to Gln-522 and Met-649 to Arg-678.

This is an uncharacterized protein from Arabidopsis thaliana (Mouse-ear cress).